Reading from the N-terminus, the 230-residue chain is Cytidylate kinase (230 aa).

17–25 (GPTASGKGT) contributes to the ATP binding site.

It belongs to the cytidylate kinase family. Type 1 subfamily.

It is found in the cytoplasm. It catalyses the reaction CMP + ATP = CDP + ADP. It carries out the reaction dCMP + ATP = dCDP + ADP. This chain is Cytidylate kinase, found in Ralstonia nicotianae (strain ATCC BAA-1114 / GMI1000) (Ralstonia solanacearum).